The following is a 140-amino-acid chain: Sec-independent protein translocase protein TatB (140 aa).

Residues 1 to 21 form a helical membrane-spanning segment; it reads MFDIGFSELLLIAVVALVVLG. Residues 119 to 140 form a disordered region; sequence VHVTSPPPSTSTHGNNGQEKSQ. The segment covering 128–140 has biased composition (polar residues); the sequence is TSTHGNNGQEKSQ.

It belongs to the TatB family. In terms of assembly, the Tat system comprises two distinct complexes: a TatABC complex, containing multiple copies of TatA, TatB and TatC subunits, and a separate TatA complex, containing only TatA subunits. Substrates initially bind to the TatABC complex, which probably triggers association of the separate TatA complex to form the active translocon.

The protein localises to the cell inner membrane. Part of the twin-arginine translocation (Tat) system that transports large folded proteins containing a characteristic twin-arginine motif in their signal peptide across membranes. Together with TatC, TatB is part of a receptor directly interacting with Tat signal peptides. TatB may form an oligomeric binding site that transiently accommodates folded Tat precursor proteins before their translocation. This Xylella fastidiosa (strain 9a5c) protein is Sec-independent protein translocase protein TatB.